A 213-amino-acid polypeptide reads, in one-letter code: MSSVKLFKDLLGNTETVELKNKKLFISDKKINHQEIFNSVLVEEANSRQSTASTLTKAEVRGGGRKPYKQKHTGRARQGSIRNPHYVGGGRAFGPSPEKNYTLKQNSKAYKLAFQSAMTLKLNEQGLNLLVNKIDMKEPSTKTISKMLKKVSYENKKVLFVINDKNENFLKSCKNIQKVTSKMWNQVSVRDILNSDIAVIQEDAFDKISEVFA.

The interval 51-90 is disordered; sequence TASTLTKAEVRGGGRKPYKQKHTGRARQGSIRNPHYVGGG. Residues 63–75 show a composition bias toward basic residues; it reads GGRKPYKQKHTGR.

This sequence belongs to the universal ribosomal protein uL4 family. As to quaternary structure, part of the 50S ribosomal subunit.

Its function is as follows. One of the primary rRNA binding proteins, this protein initially binds near the 5'-end of the 23S rRNA. It is important during the early stages of 50S assembly. It makes multiple contacts with different domains of the 23S rRNA in the assembled 50S subunit and ribosome. Functionally, forms part of the polypeptide exit tunnel. This is Large ribosomal subunit protein uL4 from Malacoplasma penetrans (strain HF-2) (Mycoplasma penetrans).